The chain runs to 549 residues: Chaperonin GroEL (549 aa).

ATP contacts are provided by residues 30 to 33, Lys-51, 87 to 91, Gly-415, 479 to 481, and Asp-495; these read TLGP, DGTTT, and NAA.

The protein belongs to the chaperonin (HSP60) family. As to quaternary structure, forms a cylinder of 14 subunits composed of two heptameric rings stacked back-to-back. Interacts with the co-chaperonin GroES.

Its subcellular location is the cytoplasm. The catalysed reaction is ATP + H2O + a folded polypeptide = ADP + phosphate + an unfolded polypeptide.. In terms of biological role, together with its co-chaperonin GroES, plays an essential role in assisting protein folding. The GroEL-GroES system forms a nano-cage that allows encapsulation of the non-native substrate proteins and provides a physical environment optimized to promote and accelerate protein folding. This is Chaperonin GroEL from Stenotrophomonas maltophilia (strain K279a).